We begin with the raw amino-acid sequence, 154 residues long: Ubiquitin-like protein 4A-A (154 aa).

The 76-residue stretch at 1–76 folds into the Ubiquitin-like domain; that stretch reads MILTVKPLQG…LNLVVRPAGE (76 aa).

As to quaternary structure, component of the BAT3 complex.

It is found in the cytoplasm. The protein resides in the cytosol. In terms of biological role, component of the BAT3 complex, a multiprotein complex involved in the post-translational delivery of tail-anchored (TA) membrane proteins to the endoplasmic reticulum membrane. TA membrane proteins, also named type II transmembrane proteins, contain a single C-terminal transmembrane region. The chain is Ubiquitin-like protein 4A-A (ubl4aa) from Salmo salar (Atlantic salmon).